The chain runs to 386 residues: Mannitol-1-phosphate 5-dehydrogenase (386 aa).

Residue 4–15 (AIHFGGGNIGRG) participates in NAD(+) binding. The active site involves lysine 211.

The protein belongs to the mannitol dehydrogenase family. Monomer.

The catalysed reaction is D-mannitol 1-phosphate + NAD(+) = beta-D-fructose 6-phosphate + NADH + H(+). Its function is as follows. Catalyzes the NAD(H)-dependent interconversion of D-fructose 6-phosphate and D-mannitol 1-phosphate in the mannitol metabolic pathway. The chain is Mannitol-1-phosphate 5-dehydrogenase (mpdA) from Emericella nidulans (strain FGSC A4 / ATCC 38163 / CBS 112.46 / NRRL 194 / M139) (Aspergillus nidulans).